We begin with the raw amino-acid sequence, 809 residues long: Leucine--tRNA ligase (809 aa).

The 'HIGH' region motif lies at 40–50; it reads PYPSGRIHMGH. Residues 579–583 carry the 'KMSKS' region motif; the sequence is KMSKS. K582 contacts ATP.

The protein belongs to the class-I aminoacyl-tRNA synthetase family.

The protein resides in the cytoplasm. The enzyme catalyses tRNA(Leu) + L-leucine + ATP = L-leucyl-tRNA(Leu) + AMP + diphosphate. This Campylobacter lari (strain RM2100 / D67 / ATCC BAA-1060) protein is Leucine--tRNA ligase.